The chain runs to 323 residues: Acetyl-coenzyme A carboxylase carboxyl transferase subunit alpha (323 aa).

Positions 32–293 constitute a CoA carboxyltransferase C-terminal domain; sequence NISEEVAKLQ…RKALAAQLES (262 aa).

The protein belongs to the AccA family. In terms of assembly, acetyl-CoA carboxylase is a heterohexamer composed of biotin carboxyl carrier protein (AccB), biotin carboxylase (AccC) and two subunits each of ACCase subunit alpha (AccA) and ACCase subunit beta (AccD).

The protein localises to the cytoplasm. It carries out the reaction N(6)-carboxybiotinyl-L-lysyl-[protein] + acetyl-CoA = N(6)-biotinyl-L-lysyl-[protein] + malonyl-CoA. It participates in lipid metabolism; malonyl-CoA biosynthesis; malonyl-CoA from acetyl-CoA: step 1/1. Its function is as follows. Component of the acetyl coenzyme A carboxylase (ACC) complex. First, biotin carboxylase catalyzes the carboxylation of biotin on its carrier protein (BCCP) and then the CO(2) group is transferred by the carboxyltransferase to acetyl-CoA to form malonyl-CoA. This chain is Acetyl-coenzyme A carboxylase carboxyl transferase subunit alpha, found in Alcanivorax borkumensis (strain ATCC 700651 / DSM 11573 / NCIMB 13689 / SK2).